The sequence spans 130 residues: Biotin carboxyl carrier protein (130 aa).

Residues 20-64 (EISESSVPAATPITPTTENTRAASDQKQQSQTPSPAATASAANTM) form a disordered region. Over residues 23–46 (ESSVPAATPITPTTENTRAASDQK) the composition is skewed to polar residues. Residues 47–64 (QQSQTPSPAATASAANTM) are compositionally biased toward low complexity. In terms of domain architecture, Biotinyl-binding spans 55-130 (AATASAANTM…NAGDNLITIA (76 aa)). An N6-biotinyllysine modification is found at K96.

The chain is Biotin carboxyl carrier protein (bcc) from Streptococcus mutans serotype c (strain ATCC 700610 / UA159).